The sequence spans 247 residues: 3,4-dihydroxy-2-butanone 4-phosphate synthase (247 aa).

Residues 38-39 (RE), D43, 179-183 (RMGQT), and E203 each bind D-ribulose 5-phosphate. A Mg(2+)-binding site is contributed by E39.

The protein belongs to the DHBP synthase family. Homodimer. Requires Mg(2+) as cofactor. It depends on Mn(2+) as a cofactor.

The catalysed reaction is D-ribulose 5-phosphate = (2S)-2-hydroxy-3-oxobutyl phosphate + formate + H(+). It functions in the pathway cofactor biosynthesis; riboflavin biosynthesis; 2-hydroxy-3-oxobutyl phosphate from D-ribulose 5-phosphate: step 1/1. Catalyzes the conversion of D-ribulose 5-phosphate to formate and 3,4-dihydroxy-2-butanone 4-phosphate. This Methanosarcina mazei (strain ATCC BAA-159 / DSM 3647 / Goe1 / Go1 / JCM 11833 / OCM 88) (Methanosarcina frisia) protein is 3,4-dihydroxy-2-butanone 4-phosphate synthase.